Consider the following 212-residue polypeptide: uncharacterized protein (212 aa).

Glycine 53, glutamate 74, and aspartate 97 together coordinate S-adenosyl-L-methionine.

It belongs to the methyltransferase superfamily. YrrT family.

Its function is as follows. Could be a S-adenosyl-L-methionine-dependent methyltransferase. This is an uncharacterized protein from Bacillus mycoides (strain KBAB4) (Bacillus weihenstephanensis).